Reading from the N-terminus, the 888-residue chain is CRISPR-associated endonuclease/helicase Cas3 (888 aa).

The HD Cas3-type domain occupies 20-231; that stretch reads KGNDIHLLIY…AGFCSLADWL (212 aa). Residues aspartate 75 and histidine 160 each coordinate Mg(2+). The 204-residue stretch at 301 to 504 folds into the Helicase ATP-binding domain; the sequence is DALPVAPGLT…LDTYGLHTDP (204 aa). 314–321 contacts ATP; it reads APTGSGKT. A DEAH box motif is present at residues 452-455; it reads DEVH. The Helicase C-terminal domain occupies 556–735; the sequence is MLERMIAAAN…AYRQWLDSIY (180 aa).

The protein in the N-terminal section; belongs to the CRISPR-associated nuclease Cas3-HD family. This sequence in the central section; belongs to the CRISPR-associated helicase Cas3 family. As to quaternary structure, interacts with the CasA subunit of Cascade once Cascade has recognized target DNA. Mg(2+) is required as a cofactor.

CRISPR (clustered regularly interspaced short palindromic repeat), is an adaptive immune system that provides protection against mobile genetic elements (viruses, transposable elements and conjugative plasmids). CRISPR clusters contain sequences complementary to antecedent mobile elements and target invading nucleic acids. CRISPR clusters are transcribed and processed into CRISPR RNA (crRNA). Cas3 plus Cascade participate in CRISPR interference, the third stage of CRISPR immunity. Its function is as follows. Acts as an endonuclease, a 3'-5'exonuclease, and an ATP-dependent dsDNA helicase. Anneals and unwinds R-loops (in which crRNA binds the target DNA, displacing the noncomplementary strand). Unwinding requires ATP, annealing does not. Required along with the Cascade complex for resistance to bacteriophage lambda infection as well as the ability to cure CRISPR-encoding high-copy number plasmid. A Cas3-CasA fusion protein purified with the Cascade complex nicks target plasmid in the presence but not absence of Mg(2+), and degrades plasmid fully in the presence of Mg(2+) and ATP, suggesting the helicase activity is required for complete degradation. This Escherichia coli (strain K12) protein is CRISPR-associated endonuclease/helicase Cas3 (ygcB).